Here is a 642-residue protein sequence, read N- to C-terminus: Assimilatory sulfite reductase (ferredoxin), chloroplastic (642 aa).

The transit peptide at 1–61 (MSSTFRAPAG…SSSSSSPIQA (61 aa)) directs the protein to the chloroplast. Positions 46 to 74 (PVPPSASSSSSSPIQAVSTPAKPETATKR) are disordered. 4 residues coordinate [4Fe-4S] cluster: C503, C509, C549, and C553. A siroheme-binding site is contributed by C553.

The protein belongs to the nitrite and sulfite reductase 4Fe-4S domain family. In terms of assembly, monomer. Interacts with ferredoxin. It depends on siroheme as a cofactor. Requires [4Fe-4S] cluster as cofactor. Post-translationally, phosphorylated; this phosphorylation reduces DNA-binding. In terms of tissue distribution, present in leaves and roots.

It is found in the plastid. Its subcellular location is the chloroplast stroma. The protein resides in the chloroplast nucleoid. The protein localises to the plastid stroma. The catalysed reaction is hydrogen sulfide + 6 oxidized [2Fe-2S]-[ferredoxin] + 3 H2O = sulfite + 6 reduced [2Fe-2S]-[ferredoxin] + 7 H(+). Functionally, essential protein with sulfite reductase activity required in assimilatory sulfate reduction pathway during both primary and secondary metabolism and thus involved in development and growth. DNA-binding protein that binds to both double-stranded and single-stranded DNA without significant sequence specificity to reversibly repress the transcriptional activity of chloroplast nucleoids by promoting DNA compaction and possibly regulate DNA replication. This is Assimilatory sulfite reductase (ferredoxin), chloroplastic (SIR) from Arabidopsis thaliana (Mouse-ear cress).